A 308-amino-acid chain; its full sequence is D-alanine--D-alanine ligase (308 aa).

The 200-residue stretch at Lys103–Glu302 folds into the ATP-grasp domain. Met130–Thr184 contacts ATP. 3 residues coordinate Mg(2+): Asp252, Glu269, and Asn271.

The protein belongs to the D-alanine--D-alanine ligase family. Requires Mg(2+) as cofactor. Mn(2+) serves as cofactor.

Its subcellular location is the cytoplasm. The catalysed reaction is 2 D-alanine + ATP = D-alanyl-D-alanine + ADP + phosphate + H(+). It functions in the pathway cell wall biogenesis; peptidoglycan biosynthesis. Cell wall formation. This chain is D-alanine--D-alanine ligase, found in Afipia carboxidovorans (strain ATCC 49405 / DSM 1227 / KCTC 32145 / OM5) (Oligotropha carboxidovorans).